The following is a 149-amino-acid chain: Nucleoside diphosphate kinase (149 aa).

Residues Lys9, Phe57, Arg85, Thr91, Arg102, and Asn112 each contribute to the ATP site. His115 (pros-phosphohistidine intermediate) is an active-site residue.

This sequence belongs to the NDK family. Homotetramer. Mg(2+) is required as a cofactor.

It localises to the cytoplasm. The catalysed reaction is a 2'-deoxyribonucleoside 5'-diphosphate + ATP = a 2'-deoxyribonucleoside 5'-triphosphate + ADP. It carries out the reaction a ribonucleoside 5'-diphosphate + ATP = a ribonucleoside 5'-triphosphate + ADP. Functionally, major role in the synthesis of nucleoside triphosphates other than ATP. The ATP gamma phosphate is transferred to the NDP beta phosphate via a ping-pong mechanism, using a phosphorylated active-site intermediate. This chain is Nucleoside diphosphate kinase, found in Staphylococcus epidermidis (strain ATCC 35984 / DSM 28319 / BCRC 17069 / CCUG 31568 / BM 3577 / RP62A).